A 60-amino-acid chain; its full sequence is Metallothionein A (60 aa).

Residues 1 to 28 (MDPCECSKTGKCNCGTSCTCTNCSCKCC) are beta. The a divalent metal cation site is built by C4, C6, C12, C14, C18, C20, C23, C25, C28, C32, C33, C35, C36, C40, C43, C47, C49, C54, C58, and C59. Residues 29 to 60 (KKSCCSCCPSGCSKCASGCVCKGNSCDKSCCQ) are alpha.

Belongs to the metallothionein superfamily. Type 1 family.

Metallothioneins have a high content of cysteine residues that bind various heavy metals. This is Metallothionein A (mta) from Cyprinodon sp. (Pupfish).